Here is a 336-residue protein sequence, read N- to C-terminus: Glycerol-3-phosphate dehydrogenase [NAD(P)+] (336 aa).

NADPH is bound by residues Ser16, Tyr17, His37, and Lys111. Positions 111, 140, and 142 each coordinate sn-glycerol 3-phosphate. Ala144 is an NADPH binding site. 5 residues coordinate sn-glycerol 3-phosphate: Lys196, Asp249, Ser259, Arg260, and Asn261. Lys196 acts as the Proton acceptor in catalysis. Arg260 is a binding site for NADPH. Val284 and Glu286 together coordinate NADPH.

This sequence belongs to the NAD-dependent glycerol-3-phosphate dehydrogenase family.

The protein resides in the cytoplasm. It carries out the reaction sn-glycerol 3-phosphate + NAD(+) = dihydroxyacetone phosphate + NADH + H(+). It catalyses the reaction sn-glycerol 3-phosphate + NADP(+) = dihydroxyacetone phosphate + NADPH + H(+). It participates in membrane lipid metabolism; glycerophospholipid metabolism. In terms of biological role, catalyzes the reduction of the glycolytic intermediate dihydroxyacetone phosphate (DHAP) to sn-glycerol 3-phosphate (G3P), the key precursor for phospholipid synthesis. The protein is Glycerol-3-phosphate dehydrogenase [NAD(P)+] of Actinobacillus pleuropneumoniae serotype 3 (strain JL03).